We begin with the raw amino-acid sequence, 194 residues long: Potassium-transporting ATPase KdpC subunit (194 aa).

Residues 12 to 34 traverse the membrane as a helical segment; sequence LFLLLLTGGVYPLLTTALGQWWF.

Belongs to the KdpC family. The system is composed of three essential subunits: KdpA, KdpB and KdpC.

The protein localises to the cell inner membrane. In terms of biological role, part of the high-affinity ATP-driven potassium transport (or Kdp) system, which catalyzes the hydrolysis of ATP coupled with the electrogenic transport of potassium into the cytoplasm. This subunit acts as a catalytic chaperone that increases the ATP-binding affinity of the ATP-hydrolyzing subunit KdpB by the formation of a transient KdpB/KdpC/ATP ternary complex. In Salmonella choleraesuis (strain SC-B67), this protein is Potassium-transporting ATPase KdpC subunit.